Reading from the N-terminus, the 207-residue chain is ATP-dependent Clp protease proteolytic subunit (207 aa).

S111 (nucleophile) is an active-site residue. H136 is a catalytic residue.

It belongs to the peptidase S14 family. Fourteen ClpP subunits assemble into 2 heptameric rings which stack back to back to give a disk-like structure with a central cavity, resembling the structure of eukaryotic proteasomes.

The protein resides in the cytoplasm. It catalyses the reaction Hydrolysis of proteins to small peptides in the presence of ATP and magnesium. alpha-casein is the usual test substrate. In the absence of ATP, only oligopeptides shorter than five residues are hydrolyzed (such as succinyl-Leu-Tyr-|-NHMec, and Leu-Tyr-Leu-|-Tyr-Trp, in which cleavage of the -Tyr-|-Leu- and -Tyr-|-Trp bonds also occurs).. In terms of biological role, cleaves peptides in various proteins in a process that requires ATP hydrolysis. Has a chymotrypsin-like activity. Plays a major role in the degradation of misfolded proteins. This is ATP-dependent Clp protease proteolytic subunit from Yersinia enterocolitica serotype O:8 / biotype 1B (strain NCTC 13174 / 8081).